Consider the following 526-residue polypeptide: Peptide chain release factor 3 (526 aa).

One can recognise a tr-type G domain in the interval aspartate 9–leucine 277. Residues serine 18 to threonine 25, aspartate 86 to histidine 90, and asparagine 140 to aspartate 143 contribute to the GTP site.

The protein belongs to the TRAFAC class translation factor GTPase superfamily. Classic translation factor GTPase family. PrfC subfamily.

The protein localises to the cytoplasm. In terms of biological role, increases the formation of ribosomal termination complexes and stimulates activities of RF-1 and RF-2. It binds guanine nucleotides and has strong preference for UGA stop codons. It may interact directly with the ribosome. The stimulation of RF-1 and RF-2 is significantly reduced by GTP and GDP, but not by GMP. In Shewanella frigidimarina (strain NCIMB 400), this protein is Peptide chain release factor 3.